Reading from the N-terminus, the 182-residue chain is Keratin, type II cytoskeletal 60 kDa, component III (182 aa).

The IF rod domain occupies Glu-1–Leu-63. The segment at Glu-1–Leu-63 is coil 2. Positions Leu-63–Ser-182 are tail. The segment at Phe-157 to Ser-182 is disordered. A compositionally biased stretch (low complexity) spans Ser-164–Ser-182.

This sequence belongs to the intermediate filament family. In terms of assembly, heterotetramer of two type I and two type II keratins.

The chain is Keratin, type II cytoskeletal 60 kDa, component III from Bos taurus (Bovine).